The primary structure comprises 199 residues: Fe/S biogenesis protein NfuA (199 aa).

Residues Cys156 and Cys159 each coordinate [4Fe-4S] cluster.

Belongs to the NfuA family. Homodimer. It depends on [4Fe-4S] cluster as a cofactor.

In terms of biological role, involved in iron-sulfur cluster biogenesis. Binds a 4Fe-4S cluster, can transfer this cluster to apoproteins, and thereby intervenes in the maturation of Fe/S proteins. Could also act as a scaffold/chaperone for damaged Fe/S proteins. The chain is Fe/S biogenesis protein NfuA from Actinobacillus pleuropneumoniae serotype 5b (strain L20).